A 140-amino-acid chain; its full sequence is UPF0251 protein Athe_2281 (140 aa).

The protein belongs to the UPF0251 family.

The sequence is that of UPF0251 protein Athe_2281 from Caldicellulosiruptor bescii (strain ATCC BAA-1888 / DSM 6725 / KCTC 15123 / Z-1320) (Anaerocellum thermophilum).